The sequence spans 2499 residues: Probable polyketide synthase 23 (2499 aa).

Residues D11 to E430 form the Ketosynthase family 3 (KS3) domain. Residues C177, H316, and H354 each act as for beta-ketoacyl synthase activity in the active site. An acyl/malonyl transferases region spans residues G623–Y656. Catalysis depends on S633, which acts as the For acyl/malonyl transferase activity. Residues I924 to V1044 are N-terminal hotdog fold. The 286-residue stretch at I924–D1209 folds into the PKS/mFAS DH domain. Catalysis depends on H956, which acts as the Proton acceptor; for dehydratase activity. A C-terminal hotdog fold region spans residues N1059–D1209. Residue D1121 is the Proton donor; for dehydratase activity of the active site. Residues E2414–V2491 form the Carrier domain. Residue S2451 is modified to O-(pantetheine 4'-phosphoryl)serine.

The cofactor is pantetheine 4'-phosphate.

Probable polyketide synthase. The protein is Probable polyketide synthase 23 (pks23) of Dictyostelium discoideum (Social amoeba).